A 702-amino-acid polypeptide reads, in one-letter code: Polynucleotide 5'-hydroxyl-kinase NOL9 (702 aa).

Ala-2 is modified (N-acetylalanine). The Nucleolar localization signal signature appears at 31–47; sequence RRPRRRLGSLRWCGRRR. Residues 69–101 form a disordered region; the sequence is VSRAAAARRPNTATPSPIPSPTPASEPESEPEL. The segment covering 71 to 83 has biased composition (low complexity); sequence RAAAARRPNTATP. An ATP-binding site is contributed by 306 to 313; the sequence is GSQDVGKS. Residues 480–702 form an interaction with LAS1L region; sequence FADEEKESPV…RRPKFCRKMK (223 aa). A Glycyl lysine isopeptide (Lys-Gly) (interchain with G-Cter in SUMO2) cross-link involves residue Lys-485. Ser-487 is subject to Phosphoserine. The span at 680-689 shows a compositional bias: basic and acidic residues; sequence AREPEEAHKE. Positions 680-702 are disordered; it reads AREPEEAHKEKPYRRPKFCRKMK. Residues 690 to 702 show a composition bias toward basic residues; that stretch reads KPYRRPKFCRKMK.

Belongs to the Clp1 family. NOL9/GRC3 subfamily. Interacts with PELP1, WDR18 and SENP3. Interacts with LAS1L to form an ITS2 pre-rRNA endonuclease-kinase complex.

Its subcellular location is the nucleus. It is found in the nucleolus. The enzyme catalyses a 5'-end dephospho-2'-deoxyribonucleoside-DNA + ATP = a 5'-end 5'-phospho-2'-deoxyribonucleoside-DNA + ADP + H(+). The catalysed reaction is a 5'-end dephospho-ribonucleoside-RNA + ATP = a 5'-end 5'-phospho-ribonucleoside-RNA + ADP + H(+). Its function is as follows. Polynucleotide kinase that can phosphorylate the 5'-hydroxyl groups of single-stranded and double-stranded RNA and DNA substrates. Involved in rRNA processing and its kinase activity is required for the processing of the 32S precursor into 5.8S and 28S rRNAs, more specifically for the generation of the major 5.8S(S) form. Required for the efficient pre-rRNA processing of internal transcribed spacer 2 (ITS2). Associates with LAS1L to form an ITS2 pre-rRNA endonuclease-kinase complex and is responsible for the transport of this complex into the nucleolus. This Homo sapiens (Human) protein is Polynucleotide 5'-hydroxyl-kinase NOL9 (NOL9).